The chain runs to 486 residues: MQIKDLIYKVSLISVSGRTDVDVTAICFDSRKVEKGSMFIAVRGVSSDGHSFIADVIQKGATAVVCEELPEIESTADCTIIQVKDSAEALGMIASNFYDSPSSKLKLVGVTGTNGKTTTVTLLYRLFRKLGYKTGLLSTVENIIEDKVVQATHTTPDAISLNKLLADMVKAGCTHCFMEVSSHAAVQRRIAGLQFAGGLFSNITHDHLDYHKTFDEYIKAKKLFFDGLPNDSFALINSDDKRGRVMIQNTRAKTYTYSLLALADFKGKLISTTMQGLEMDVDGIQAWFRLIGNFNAYNLLAVYATAVLLGEDKEEVLMQLSTIEAANGRFEQQISATRITVIVDYAHTPDALKNVLETITELKGANKIITVVGCGGNRDAAKRPVMADIACQFSDHVVLTSDNPRNEEPQAILTEMEKGVRIVDKKKVLSVLDRKEAIKVACTLASTGDIILVAGKGHETYQEIKGVKYPFDDRLIIKELLDTLGK.

UDP-N-acetyl-alpha-D-muramoyl-L-alanyl-D-glutamate is bound at residue serine 30. Residue 112–118 (GTNGKTT) coordinates ATP. Residues 154–155 (TT), serine 181, glutamine 187, and arginine 189 contribute to the UDP-N-acetyl-alpha-D-muramoyl-L-alanyl-D-glutamate site. Lysine 221 is modified (N6-carboxylysine). Meso-2,6-diaminopimelate contacts are provided by residues arginine 378, 402–405 (DNPR), glycine 455, and glutamate 459. Positions 402–405 (DNPR) match the Meso-diaminopimelate recognition motif motif.

Belongs to the MurCDEF family. MurE subfamily. Requires Mg(2+) as cofactor. Post-translationally, carboxylation is probably crucial for Mg(2+) binding and, consequently, for the gamma-phosphate positioning of ATP.

The protein resides in the cytoplasm. The enzyme catalyses UDP-N-acetyl-alpha-D-muramoyl-L-alanyl-D-glutamate + meso-2,6-diaminopimelate + ATP = UDP-N-acetyl-alpha-D-muramoyl-L-alanyl-gamma-D-glutamyl-meso-2,6-diaminopimelate + ADP + phosphate + H(+). It participates in cell wall biogenesis; peptidoglycan biosynthesis. In terms of biological role, catalyzes the addition of meso-diaminopimelic acid to the nucleotide precursor UDP-N-acetylmuramoyl-L-alanyl-D-glutamate (UMAG) in the biosynthesis of bacterial cell-wall peptidoglycan. This Cytophaga hutchinsonii (strain ATCC 33406 / DSM 1761 / CIP 103989 / NBRC 15051 / NCIMB 9469 / D465) protein is UDP-N-acetylmuramoyl-L-alanyl-D-glutamate--2,6-diaminopimelate ligase.